A 684-amino-acid chain; its full sequence is MGKKSVSFNRNNYKKRKNERTEPLPRRIFKNDKPSKFKSKRKEKDKNSDAYDEMLLNNNFTLLDQEEPMVEIGSKKSRNDNDSEGIRDKGGVEISNKNDPYIQFGKADPLEPLEKPDLPEEAIKRGEPTILLGIPKREGRKTNPVHDKAVENNSDFIKFDWNSDEDEDSVSNDKSKNNESLKKSSKNEIPGFMRQRGRFFHEANEKSDSNRKRKRQAYELDSQSCPWHRQYKVEREVSRIFHQDILHFIDYITPTPEEHAVRKTLVSRINQAVLQKWPDVSLYVFGSFETKLYLPTSDLDLVIISPEHHYRGTKKDMFVLAHHLKKLKLASEVQVITTANVPIIKFVDPLTKVHVDISFNQPGGLKTCLVVNGFMKKYPALRPLVIIIKHFLNMRALNEVFLGGLSSYAIVCLVVSFLQLHPRLSTGSMREEDNFGVLLLEFLELYGKQFYYDAVGIAVHNGGFYFSKKKMGWLKPNQPYLLSIQDPVDFQNDVSKSSRGLLRVKATFANGFDLLTSKLYALASRIEREGVNRVKDFPSILSTILSVDEGVRQHREHMLKCYKNNPVPLEPLVEVDALASIDVDKLPLQDVGLQYVEDESDSDETDAAKDDLFKVNESIETNGHENFQKQALTSTGEQSSSNSRANPSKLFNISSDDSEDEVPIIEDTTASDEESRAKKIRKRF.

3 disordered regions span residues 1-52 (MGKK…DAYD), 64-127 (DQEE…KRGE), and 161-219 (WNSD…QAYE). Composition is skewed to basic and acidic residues over residues 19–35 (ERTEPLPRRIFKNDKPS), 73–91 (GSKKSRNDNDSEGIRDKGG), 108–127 (DPLEPLEKPDLPEEAIKRGE), 171–186 (SNDKSKNNESLKKSSK), and 199–210 (FFHEANEKSDSN). Aspartate 298 and aspartate 300 together coordinate Mg(2+). Residues glycine 364, lysine 389, serine 407, tyrosine 408, asparagine 492, and lysine 496 each coordinate ATP. The PAP-associated domain maps to 434–492 (NFGVLLLEFLELYGKQFYYDAVGIAVHNGGFYFSKKKMGWLKPNQPYLLSIQDPVDFQN). The segment at 623–684 (GHENFQKQAL…SRAKKIRKRF (62 aa)) is disordered. Positions 628–655 (QKQALTSTGEQSSSNSRANPSKLFNISS) are enriched in polar residues. Residues 656–672 (DDSEDEVPIIEDTTASD) show a composition bias toward acidic residues.

Belongs to the DNA polymerase type-B-like family. In terms of assembly, heterooligomer. Component of the TRAMP complex composed of at least cid14, mtr4, and air1. It depends on Mg(2+) as a cofactor. Mn(2+) serves as cofactor.

Its subcellular location is the nucleus. The protein resides in the nucleolus. The catalysed reaction is RNA(n) + ATP = RNA(n)-3'-adenine ribonucleotide + diphosphate. In terms of biological role, required for 3' polyadenylation of the 5.8S and 25S rRNAs as a prelude to their degradation in the exosome. Involved in the nucleolar organization to ensure faithful chromosome segregation during mitosis. The protein is Poly(A) RNA polymerase cid14 (cid14) of Schizosaccharomyces pombe (strain 972 / ATCC 24843) (Fission yeast).